The following is a 672-amino-acid chain: Zinc finger protein 271 (672 aa).

Positions 1 to 29 are disordered; it reads MEIQFNYESQEHHLLSDGENKTKIGKPAS. A compositionally biased stretch (basic and acidic residues) spans 9 to 22; it reads SQEHHLLSDGENKT. The segment at 80–102 adopts a C2H2-type 1; degenerate zinc-finger fold; that stretch reads HNCDEYGQSFVWNTGLFRHRKTH. C2H2-type zinc fingers lie at residues 107-129, 135-157, 163-185, 191-213, 219-241, 247-269, 275-297, 303-325, 331-353, 359-381, 387-409, 415-437, 443-465, 471-493, 499-521, 527-549, 555-577, 583-605, and 611-633; these read YECD…QRIH, YSCN…QRVH, YKCD…QRIH, YQCS…QRIH, YTCN…QRIH, YPCN…RRIH, YKCN…QRIH, YPCD…QRIH, YPCN…HRIH, YPCS…QRIH, YACN…QRVH, YHCN…QRIH, YLCT…QRIH, YKCS…QRIH, NPCN…QKIH, YKCD…QKIH, and YRCV…EEVH.

It belongs to the krueppel C2H2-type zinc-finger protein family.

The protein localises to the nucleus. Its function is as follows. May be involved in transcriptional regulation. The protein is Zinc finger protein 271 (ZNF271) of Pongo abelii (Sumatran orangutan).